A 180-amino-acid chain; its full sequence is Hypoxanthine-guanine phosphoribosyltransferase (180 aa).

Positions 43 and 44 each coordinate diphosphate. Residues E99 and D100 each coordinate Mg(2+). D103 (proton acceptor) is an active-site residue. Residues K131, 152–153 (FV), and D159 contribute to the GMP site. Position 165 (R165) interacts with diphosphate.

This sequence belongs to the purine/pyrimidine phosphoribosyltransferase family. It depends on Mg(2+) as a cofactor.

It localises to the cytoplasm. It carries out the reaction IMP + diphosphate = hypoxanthine + 5-phospho-alpha-D-ribose 1-diphosphate. It catalyses the reaction GMP + diphosphate = guanine + 5-phospho-alpha-D-ribose 1-diphosphate. It participates in purine metabolism; IMP biosynthesis via salvage pathway; IMP from hypoxanthine: step 1/1. It functions in the pathway purine metabolism; GMP biosynthesis via salvage pathway; GMP from guanine: step 1/1. In terms of biological role, purine salvage pathway enzyme that catalyzes the transfer of the ribosyl-5-phosphate group from 5-phospho-alpha-D-ribose 1-diphosphate (PRPP) to the N9 position of the 6-oxopurines hypoxanthine and guanine to form the corresponding ribonucleotides IMP (inosine 5'-monophosphate) and GMP (guanosine 5'-monophosphate), with the release of PPi. This chain is Hypoxanthine-guanine phosphoribosyltransferase (hpt), found in Streptococcus pneumoniae serotype 4 (strain ATCC BAA-334 / TIGR4).